The following is a 256-amino-acid chain: MRRLLPLAGATLLIAAAGGASGQQAGVGSIITRAMFESMLSHRGDQGCQGAFYTYDAFIKAAGDFPRFGTTGNDETRRRELAAFFGQTSHETTGGWATAPDGPFAWGYCRVNEITPSDPPYYGRGPIQLTHKYNYQLAGDALGLDLVNNPDLVSSDPVVAFRTAIWFWMTAQSPKPSCHDVITNQWTPSGDDRSSGRLPGYGMATNIINGGEECGKGYSTDNAKDRVGYYKRYCDMFRVGYGDNIACRDQKPYGGG.

Positions 1 to 22 (MRRLLPLAGATLLIAAAGGASG) are cleaved as a signal peptide. 2 disulfides stabilise this stretch: Cys-48/Cys-109 and Cys-214/Cys-247. Residue Glu-91 is the Proton donor of the active site.

This sequence belongs to the glycosyl hydrolase 19 family. Chitinase class II subfamily. Expressed in leaves and at lower levels in roots, sheaths and meristems.

It carries out the reaction Random endo-hydrolysis of N-acetyl-beta-D-glucosaminide (1-&gt;4)-beta-linkages in chitin and chitodextrins.. The protein is Chitinase 11 (Cht11) of Oryza sativa subsp. japonica (Rice).